A 120-amino-acid chain; its full sequence is Small ribosomal subunit protein eS17 (120 aa).

It belongs to the eukaryotic ribosomal protein eS17 family. As to quaternary structure, component of the small ribosomal subunit.

It is found in the cytoplasm. This chain is Small ribosomal subunit protein eS17 (RPS17), found in Encephalitozoon cuniculi (strain GB-M1) (Microsporidian parasite).